Consider the following 324-residue polypeptide: Olfactory receptor 5A2 (324 aa).

Residues 1 to 26 (MAVGRNNTIVTKFILLGLSDHPQMKI) lie on the Extracellular side of the membrane. N-linked (GlcNAc...) asparagine glycosylation is present at asparagine 6. Residues 27–47 (FLFMLFLGLYLLTLAWNLSLI) traverse the membrane as a helical segment. Residues 48 to 55 (ALIKMDSH) lie on the Cytoplasmic side of the membrane. A helical transmembrane segment spans residues 56–76 (LHMPMYFFLSNLSFLDICYVS). Residues 77–100 (STAPKMLSDIITEQKTISFVGCAT) lie on the Extracellular side of the membrane. Residues cysteine 98 and cysteine 190 are joined by a disulfide bond. A helical transmembrane segment spans residues 101 to 121 (QYFVFCGMGLTECFLLAAMAY). Topologically, residues 122 to 134 (DRYAAICNPLLYT) are cytoplasmic. A helical transmembrane segment spans residues 135–155 (VLISHTLCLKMVVGAYVGGFL). Residues 156–197 (SSFIETYSVYQHDFCGPYMINHFFCDLPPVLALSCSDTFTSE) are Extracellular-facing. The helical transmembrane segment at 198–218 (VVTFIVSVVVGIVSVLVVLIS) threads the bilayer. Residues 219 to 238 (YGYIVAAVVKISSATGRTKA) are Cytoplasmic-facing. A helical membrane pass occupies residues 239–259 (FSTCASHLTAVTLFYGSGFFM). Over 260-272 (YMRPSSSYSLNRD) the chain is Extracellular. Residues 273-293 (KVVSIFYALVIPVVNPIIYSF) form a helical membrane-spanning segment. The Cytoplasmic segment spans residues 294-324 (RNKEIKNAMRKAMERDPGISHGGPFIFMTLG).

Belongs to the G-protein coupled receptor 1 family.

Its subcellular location is the cell membrane. In terms of biological role, odorant receptor. In Homo sapiens (Human), this protein is Olfactory receptor 5A2 (OR5A2).